A 125-amino-acid polypeptide reads, in one-letter code: Snaclec VP12 subunit B (125 aa).

3 cysteine pairs are disulfide-bonded: cysteine 4–cysteine 15, cysteine 32–cysteine 121, and cysteine 98–cysteine 113. Residues 11–122 (FEKYCYKVFQ…CNDPRYFVCK (112 aa)) form the C-type lectin domain.

This sequence belongs to the snaclec family. As to quaternary structure, heterodimer of subunits alpha and beta; disulfide-linked. Expressed by the venom gland.

Its subcellular location is the secreted. Functionally, inhibits integrin alpha-2/beta-1- (ITGA2/ITGB1) dependent melanoma metastasis. The polypeptide is Snaclec VP12 subunit B (Daboia palaestinae (Palestine viper)).